The sequence spans 41 residues: Large ribosomal subunit protein bL36 (41 aa).

Belongs to the bacterial ribosomal protein bL36 family.

This chain is Large ribosomal subunit protein bL36, found in Opitutus terrae (strain DSM 11246 / JCM 15787 / PB90-1).